A 337-amino-acid chain; its full sequence is Glyceraldehyde-3-phosphate dehydrogenase (337 aa).

NAD(+)-binding positions include 11 to 12 and G111; that span reads TI. 140–142 provides a ligand contact to D-glyceraldehyde 3-phosphate; that stretch reads SCN. Residue C141 is the Nucleophile of the active site. R169 contributes to the NAD(+) binding site. A disordered region spans residues 177 to 196; the sequence is KKGPINSIVPTTEVPSHHGP. 194–195 lines the D-glyceraldehyde 3-phosphate pocket; it reads HG. An NAD(+)-binding site is contributed by Q301.

Belongs to the glyceraldehyde-3-phosphate dehydrogenase family. As to quaternary structure, homotetramer.

It is found in the cytoplasm. It carries out the reaction D-glyceraldehyde 3-phosphate + phosphate + NADP(+) = (2R)-3-phospho-glyceroyl phosphate + NADPH + H(+). The enzyme catalyses D-glyceraldehyde 3-phosphate + phosphate + NAD(+) = (2R)-3-phospho-glyceroyl phosphate + NADH + H(+). It functions in the pathway carbohydrate degradation; glycolysis; pyruvate from D-glyceraldehyde 3-phosphate: step 1/5. This chain is Glyceraldehyde-3-phosphate dehydrogenase, found in Methanosphaera stadtmanae (strain ATCC 43021 / DSM 3091 / JCM 11832 / MCB-3).